We begin with the raw amino-acid sequence, 246 residues long: Acetoacetate decarboxylase (246 aa).

Lys-116 (schiff-base intermediate with acetoacetate) is an active-site residue.

It belongs to the ADC family.

The enzyme catalyses acetoacetate + H(+) = acetone + CO2. Its function is as follows. Catalyzes the conversion of acetoacetate to acetone and carbon dioxide. The chain is Acetoacetate decarboxylase from Burkholderia lata (strain ATCC 17760 / DSM 23089 / LMG 22485 / NCIMB 9086 / R18194 / 383).